The chain runs to 331 residues: Sucrose operon repressor (331 aa).

The 56-residue stretch at 1–56 (MASLKDVARLAGVSMMTVSRVMHNAESVRPATRDRVLQAIQTLNYVPDLSARKMRA) folds into the HTH lacI-type domain. The H-T-H motif DNA-binding region spans 4–23 (LKDVARLAGVSMMTVSRVMH).

In terms of biological role, repressor for the csc operon. Binds D-fructose as an inducer. This Escherichia coli protein is Sucrose operon repressor (cscR).